The following is a 718-amino-acid chain: Catalase-peroxidase (718 aa).

A cross-link (tryptophyl-tyrosyl-methioninium (Trp-Tyr) (with M-245)) is located at residues 98-219; that stretch reads WHAAGTYRMG…LAATEMGLIY (122 aa). Residue His99 is the Proton acceptor of the active site. Positions 219–245 form a cross-link, tryptophyl-tyrosyl-methioninium (Tyr-Met) (with W-98); that stretch reads YVNPEGPQASGDPRSAAPFIRATFGNM. His260 lines the heme b pocket.

This sequence belongs to the peroxidase family. Peroxidase/catalase subfamily. As to quaternary structure, homodimer or homotetramer. Heme b is required as a cofactor. Post-translationally, formation of the three residue Trp-Tyr-Met cross-link is important for the catalase, but not the peroxidase activity of the enzyme.

It catalyses the reaction H2O2 + AH2 = A + 2 H2O. The enzyme catalyses 2 H2O2 = O2 + 2 H2O. In terms of biological role, bifunctional enzyme with both catalase and broad-spectrum peroxidase activity. This Acinetobacter baumannii (strain ATCC 17978 / DSM 105126 / CIP 53.77 / LMG 1025 / NCDC KC755 / 5377) protein is Catalase-peroxidase.